Consider the following 169-residue polypeptide: TPD1 protein homolog 1B (169 aa).

An N-terminal signal peptide occupies residues 1 to 25; sequence MADCTTMRLASSVTIILLLLVASQA.

Expressed in roots, and at low levels in anthers during meiosis.

May play a role during anther development. The sequence is that of TPD1 protein homolog 1B from Oryza sativa subsp. japonica (Rice).